Here is a 180-residue protein sequence, read N- to C-terminus: Pro-glucagon (180 aa).

Residues 1–20 form the signal peptide; that stretch reads MKSIYFVAGLFVMLVQGSWQ. The disordered stretch occupies residues 26 to 56; that stretch reads TEEKSRSFSAPQTEPLNDLDQMNEDKRHSQG. Residue Ser54 is modified to Phosphoserine. Positions 84-89 are excised as a propeptide; that stretch reads NKNNIA. Phosphoserine is present on residues Ser105 and Ser108. Arg127 is subject to Arginine amide. Residues 131–145 constitute a propeptide that is removed on maturation; that stretch reads DFPEEVAIVEEFRRR. Phosphoserine occurs at positions 150 and 152.

It belongs to the glucagon family. Post-translationally, proglucagon is post-translationally processed in a tissue-specific manner in pancreatic A cells and intestinal L cells. In pancreatic A cells, the major bioactive hormone is glucagon cleaved by PCSK2/PC2. In the intestinal L cells PCSK1/PC1 liberates GLP-1, GLP-2, glicentin and oxyntomodulin. GLP-1 is further N-terminally truncated by post-translational processing in the intestinal L cells resulting in GLP-1(7-37) GLP-1-(7-36)amide. The C-terminal amidation is neither important for the metabolism of GLP-1 nor for its effects on the endocrine pancreas. In terms of tissue distribution, glucagon is secreted in the A cells of the islets of Langerhans. GLP-1, GLP-2, oxyntomodulin and glicentin are secreted from enteroendocrine cells throughout the gastrointestinal tract. GLP-1 and GLP-2 are also secreted in selected neurons in the brain.

It is found in the secreted. Its function is as follows. Plays a key role in glucose metabolism and homeostasis. Regulates blood glucose by increasing gluconeogenesis and decreasing glycolysis. A counterregulatory hormone of insulin, raises plasma glucose levels in response to insulin-induced hypoglycemia. Plays an important role in initiating and maintaining hyperglycemic conditions in diabetes. Potent stimulator of glucose-dependent insulin release. Also stimulates insulin release in response to IL6. Plays important roles on gastric motility and the suppression of plasma glucagon levels. May be involved in the suppression of satiety and stimulation of glucose disposal in peripheral tissues, independent of the actions of insulin. Has growth-promoting activities on intestinal epithelium. May also regulate the hypothalamic pituitary axis (HPA) via effects on LH, TSH, CRH, oxytocin, and vasopressin secretion. Increases islet mass through stimulation of islet neogenesis and pancreatic beta cell proliferation. Inhibits beta cell apoptosis. Functionally, stimulates intestinal growth and up-regulates villus height in the small intestine, concomitant with increased crypt cell proliferation and decreased enterocyte apoptosis. The gastrointestinal tract, from the stomach to the colon is the principal target for GLP-2 action. Plays a key role in nutrient homeostasis, enhancing nutrient assimilation through enhanced gastrointestinal function, as well as increasing nutrient disposal. Stimulates intestinal glucose transport and decreases mucosal permeability. In terms of biological role, significantly reduces food intake. Inhibits gastric emptying in humans. Suppression of gastric emptying may lead to increased gastric distension, which may contribute to satiety by causing a sensation of fullness. Its function is as follows. May modulate gastric acid secretion and the gastro-pyloro-duodenal activity. May play an important role in intestinal mucosal growth in the early period of life. The chain is Pro-glucagon (GCG) from Canis lupus familiaris (Dog).